A 187-amino-acid chain; its full sequence is uncharacterized protein (187 aa).

This is an uncharacterized protein from Saccharomyces cerevisiae (strain ATCC 204508 / S288c) (Baker's yeast).